Consider the following 293-residue polypeptide: Aromatic amino acid exporter YddG (293 aa).

Residues 1-6 (MTSQKA) are Cytoplasmic-facing. Residues 7-27 (TLIGLVAIVLWSTMVGLIRGV) form a helical membrane-spanning segment. The region spanning 15-137 (VLWSTMVGLI…IALTGVCWVL (123 aa)) is the EamA 1 domain. Residues 28–33 (SEGLGP) are Periplasmic-facing. Residues 34-54 (VGGAAMIYSLSGLLLIFTVGL) traverse the membrane as a helical segment. Topologically, residues 55–63 (PDIRRFPGR) are cytoplasmic. The helical transmembrane segment at 64-84 (YLIAGSVLFVSYEICLALSLG) threads the bilayer. Topologically, residues 85–92 (YAATRHQA) are periplasmic. The helical transmembrane segment at 93–113 (IEVGMVNYLWPSLTILFAILF) threads the bilayer. Residues 114–119 (NGQKTN) lie on the Cytoplasmic side of the membrane. The helical transmembrane segment at 120 to 140 (WLIVPGLLIALTGVCWVLGGE) threads the bilayer. The Periplasmic segment spans residues 141–147 (NGLNPGE). A helical transmembrane segment spans residues 148–168 (IISNVATSPLSYLLAFLGAFI). An EamA 2 domain is found at 167 to 285 (FIWATYCTVT…AVMVCVGSLL (119 aa)). The Cytoplasmic portion of the chain corresponds to 169 to 182 (WATYCTVTNKYARG). The chain crosses the membrane as a helical span at residues 183 to 203 (FNGITVFVLLTAVALWLHYFL). Over 204-207 (TPQP) the chain is Periplasmic. The helical transmembrane segment at 208–228 (AMIFSLPVIAKLFTAALTLGF) threads the bilayer. At 229-243 (AYAAWNVGILHGNVT) the chain is on the cytoplasmic side. A helical membrane pass occupies residues 244–264 (IMAVGSYFTPVMSSALAALLL). At 265 to 267 (SSP) the chain is on the periplasmic side. A helical transmembrane segment spans residues 268–288 (LSFSFWQGAVMVCVGSLLCWL). The Cytoplasmic portion of the chain corresponds to 289–293 (ATRRR).

The protein belongs to the drug/metabolite transporter (DMT) superfamily. Aromatic amino acid/paraquat exporter (ArAA/P-E) (TC 2.A.7.17) family.

The protein localises to the cell inner membrane. Amino acid transporter with broad substrate specificity. Required for resistance to methyl viologen. May function with OmpD porin. The protein is Aromatic amino acid exporter YddG (yddG) of Salmonella typhimurium (strain 14028s / SGSC 2262).